A 223-amino-acid polypeptide reads, in one-letter code: MFKMKYLIYQITNIINGKIYIGAHATLDENDGYMGSGVNIKKSIKKYGIHNFKKEILYSFSSSEEMYKMEALLVNEEFVMRTDTYNAAIGGRGNPVIVHLQDPSYRNMLSIRTKEGMTVEAKRKISKAKTGVKQSDETIAKRVKGRNEYYKTHVHPRKNKPISISHRKAISEKLGGIKKFIPICIKGVKFDNPDYAAEHFKVSPKTIRNWINADDMPDCYRIK.

The GIY-YIG domain maps to 4–87 (MKYLIYQITN…FVMRTDTYNA (84 aa)).

The protein to endonucleases of group I introns of fungi and phage. The cofactor is Mg(2+).

In terms of biological role, probably involved in the movement of the endonuclease-encoding DNA. The sequence is that of Putative endonuclease segD (segD) from Enterobacteria phage T4 (Bacteriophage T4).